We begin with the raw amino-acid sequence, 234 residues long: CHD1 helical C-terminal domain containing protein 1 (234 aa).

Residues 1 to 38 (MEASDGQADEREEPLEQGTNARSLERRSSTTPAKDSLV) form a disordered region. The interval 44-145 (LDRDTFKICK…NNQTTKFLMA (102 aa)) is CHD1 helical C-terminal domain (CHCT). The interval 200–234 (LRARGPRRRGSKLPQEPKLKRRRIKEAPDTPETCL) is disordered.

Its subcellular location is the cytoplasm. The protein resides in the nucleus. Its function is as follows. May play a role in regulation of apoptosis. The chain is CHD1 helical C-terminal domain containing protein 1 (CHCT1) from Bos taurus (Bovine).